The chain runs to 257 residues: THAP domain-containing protein 11 (257 aa).

The segment at 6–64 adopts a THAP-type zinc-finger fold; the sequence is CCVPGCYNNSHRDRDLRFYTFPKDPTQREIWLKNISRAGVSGCFSTFQPTTGHRVCSVH. Residues 196–251 adopt a coiled-coil conformation; it reads ELLRKLNEQRDIIALMEIKMKEMKNTIRQLRVTEARLQDELRQREQERERLICANT.

Belongs to the THAP11 family.

The protein localises to the nucleus. Its subcellular location is the cytoplasm. Transcription factor, which has both transcriptional activation and repression activities. Binds numerous promoters of genes and therefore can be involved in many processes. Also modulates chromatin accessibility. Required for normal brain development and neural precursor differentiation. The chain is THAP domain-containing protein 11 (thap11) from Danio rerio (Zebrafish).